The sequence spans 467 residues: UDP-N-acetylmuramate--L-alanine ligase (467 aa).

G114–T120 is a binding site for ATP.

It belongs to the MurCDEF family.

The protein localises to the cytoplasm. The catalysed reaction is UDP-N-acetyl-alpha-D-muramate + L-alanine + ATP = UDP-N-acetyl-alpha-D-muramoyl-L-alanine + ADP + phosphate + H(+). Its pathway is cell wall biogenesis; peptidoglycan biosynthesis. In terms of biological role, cell wall formation. This is UDP-N-acetylmuramate--L-alanine ligase from Nitrobacter hamburgensis (strain DSM 10229 / NCIMB 13809 / X14).